A 435-amino-acid chain; its full sequence is Eukaryotic translation initiation factor 3 subunit E (435 aa).

Positions 241–409 constitute a PCI domain; sequence TDMFFSPSYI…GTVIMNHPPQ (169 aa).

This sequence belongs to the eIF-3 subunit E family. Component of the eukaryotic translation initiation factor 3 (eIF-3) complex.

It is found in the cytoplasm. Its function is as follows. Component of the eukaryotic translation initiation factor 3 (eIF-3) complex, which is involved in protein synthesis of a specialized repertoire of mRNAs and, together with other initiation factors, stimulates binding of mRNA and methionyl-tRNAi to the 40S ribosome. The eIF-3 complex specifically targets and initiates translation of a subset of mRNAs involved in cell proliferation. This is Eukaryotic translation initiation factor 3 subunit E from Phaeosphaeria nodorum (strain SN15 / ATCC MYA-4574 / FGSC 10173) (Glume blotch fungus).